Consider the following 160-residue polypeptide: Deoxyuridine 5'-triphosphate nucleotidohydrolase (160 aa).

8 residues coordinate dUMP: Ser80, Gly93, Asp96, Tyr99, Lys104, Arg149, Phe154, and Gly155.

Belongs to the dUTPase family. As to quaternary structure, homotrimer. Mg(2+) serves as cofactor.

It catalyses the reaction dUTP + H2O = dUMP + diphosphate + H(+). It functions in the pathway pyrimidine metabolism; dUMP biosynthesis; dUMP from dCTP (dUTP route): step 2/2. Its function is as follows. Involved in nucleotide metabolism via production of dUMP, the immediate precursor of thymidine nucleotides, and decreases the intracellular concentration of dUTP so that uracil cannot be incorporated into DNA. In Debaryomyces hansenii (strain ATCC 36239 / CBS 767 / BCRC 21394 / JCM 1990 / NBRC 0083 / IGC 2968) (Yeast), this protein is Deoxyuridine 5'-triphosphate nucleotidohydrolase (DUT1).